Reading from the N-terminus, the 649-residue chain is Sodium/nucleoside cotransporter 1 (649 aa).

Topologically, residues 1–80 (MENDPSRRRE…ARSFCREHMQ (80 aa)) are cytoplasmic. A helical transmembrane segment spans residues 81–104 (LFRWIGTGLLCTGLSAFLLVACLL). The Extracellular portion of the chain corresponds to 105-109 (DFQRA). Residues 110–128 (LALFVLTCVVLTFLGHRLL) traverse the membrane as a helical segment. Residues 129 to 147 (KRLLGPKLRRFLKPQGHPR) lie on the Cytoplasmic side of the membrane. The helical transmembrane segment at 148–167 (LLLWFKRGLALAAFLGLVLW) threads the bilayer. Residues 168 to 178 (LSLDTSQRPEQ) lie on the Extracellular side of the membrane. A helical membrane pass occupies residues 179–195 (LVSFAGICVFVALLFAC). The Cytoplasmic segment spans residues 196 to 201 (SKHHCA). Residues 202-222 (VSWRAVSWGLGLQFVLGLLVI) form a helical membrane-spanning segment. The Extracellular segment spans residues 223–261 (RTEPGFIAFEWLGEQIRIFLSYTKAGSSFVFGEALVKDV). A helical membrane pass occupies residues 262 to 283 (FAFQVLPIIVFFSCVISVLYHV). The Cytoplasmic portion of the chain corresponds to 284 to 294 (GLMQWVILKIA). Residues 295–318 (WLMQVTMGTTATETLSVAGNIFVS) form a helical membrane-spanning segment. The Extracellular segment spans residues 319 to 337 (QTEAPLLIRPYLADMTLSE). The chain crosses the membrane as a helical span at residues 338–360 (VHVVMTGGYATIAGSLLGAYISF). Residues 361 to 366 (GIDATS) lie on the Cytoplasmic side of the membrane. Residues 367-386 (LIAASVMAAPCALALSKLVY) form a helical membrane-spanning segment. The Extracellular portion of the chain corresponds to 387–423 (PEVEESKFRREEGVKLTYGDAQNLIEAASTGAAISVK). A helical membrane pass occupies residues 424-446 (VVANIAANLIAFLAVLDFINAAL). At 447-457 (SWLGDMVDIQG) the chain is on the cytoplasmic side. Residues 458–479 (LSFQLICSYILRPVAFLMGVAW) form a helical membrane-spanning segment. Topologically, residues 480-534 (EDCPVVAELLGIKLFLNEFVAYQDLSKYKQRRLAGAEEWVGDRKQWISVRAEVLT) are extracellular. The helical transmembrane segment at 535–558 (TFALCGFANFSSIGIMLGGLTSMV) threads the bilayer. The Cytoplasmic segment spans residues 559–569 (PQRKSDFSQIV). Residues 570 to 592 (LRALFTGACVSLVNACMAGILYM) traverse the membrane as a helical segment. At 593–649 (PRGAEVDCMSLLNTTLSSSSFEIYQCCREAFQSVNPEFSPEALDNCCRFYNHTICAQ) the chain is on the extracellular side. 2 N-linked (GlcNAc...) asparagine glycosylation sites follow: N605 and N643.

This sequence belongs to the concentrative nucleoside transporter (CNT) (TC 2.A.41) family. N-glycosylated. N-glycosylation is required for localization to the plasma membrane and the transporter activity. Expressed in kidney.

The protein resides in the cell membrane. The protein localises to the apical cell membrane. The catalysed reaction is uridine(out) + Na(+)(out) = uridine(in) + Na(+)(in). The enzyme catalyses thymidine(out) + Na(+)(out) = thymidine(in) + Na(+)(in). It carries out the reaction cytidine(out) + Na(+)(out) = cytidine(in) + Na(+)(in). It catalyses the reaction adenosine(out) + Na(+)(out) = adenosine(in) + Na(+)(in). Its activity is regulated as follows. Due to its high apparent affinity but slow transport, adenosine could act as a negative regulator of pyrimidine transport under some conditions. Sodium and pyrimidine nucleoside symporter of the plasma membrane that imports uridine, thymidine and cytidine into cells by coupling their transport to the transmembrane sodium electrochemical gradient. Also transports adenosine, an atypical substrate transported with high apparent affinity, but low maximum velocity. Therefore, exhibits the transport characteristics of the nucleoside transport system cit or N2 subtype (N2/cit). Involved in renal nucleoside (re)absorption. In Homo sapiens (Human), this protein is Sodium/nucleoside cotransporter 1.